The sequence spans 156 residues: Small ribosomal subunit protein eS19A (156 aa).

The protein belongs to the eukaryotic ribosomal protein eS19 family.

This chain is Small ribosomal subunit protein eS19A (RpS19a), found in Drosophila melanogaster (Fruit fly).